A 142-amino-acid chain; its full sequence is Large ribosomal subunit protein uL11 (142 aa).

Belongs to the universal ribosomal protein uL11 family. In terms of assembly, part of the ribosomal stalk of the 50S ribosomal subunit. Interacts with L10 and the large rRNA to form the base of the stalk. L10 forms an elongated spine to which L12 dimers bind in a sequential fashion forming a multimeric L10(L12)X complex. Post-translationally, one or more lysine residues are methylated.

Its function is as follows. Forms part of the ribosomal stalk which helps the ribosome interact with GTP-bound translation factors. This is Large ribosomal subunit protein uL11 from Acinetobacter baylyi (strain ATCC 33305 / BD413 / ADP1).